A 298-amino-acid polypeptide reads, in one-letter code: MKPIFRRVAVIGKYPGPGAVSASDSARQIIESIAQFVTQQDCELTLEAETAAHTGLTQYHTLDVEGIGRQCDLCLVVGGDGTMLGVGRRLAGYGTPLVGINQGRLGFITDIPLEGYQDALTPILHGDYEEDVRPLMQACVMRGGECVFEALALNDVVVNRGSTSGMVELRVEVDGVFVSNQRADGLIVASPTGSTAYALSAGGPMLHPSIPGWVLVPIAPHTLSNRPIVLSDATEVAIEVAGGRDISANFDMQSLASLQHGDRILVRRSAHRVCFLHPRGWSYFATLRKKLGWYEGGS.

The Proton acceptor role is filled by Asp80. NAD(+) is bound by residues 80–81 (DG), 154–155 (ND), Arg182, Asp184, 195–200 (TAYALS), Ala219, and Gln253.

It belongs to the NAD kinase family. The cofactor is a divalent metal cation.

The protein resides in the cytoplasm. It catalyses the reaction NAD(+) + ATP = ADP + NADP(+) + H(+). Functionally, involved in the regulation of the intracellular balance of NAD and NADP, and is a key enzyme in the biosynthesis of NADP. Catalyzes specifically the phosphorylation on 2'-hydroxyl of the adenosine moiety of NAD to yield NADP. The protein is NAD kinase of Acidovorax ebreus (strain TPSY) (Diaphorobacter sp. (strain TPSY)).